Consider the following 147-residue polypeptide: Hemoglobin subunit epsilon (147 aa).

Residues 3–147 form the Globin domain; it reads HFTAEEKSTI…VATALAHKYH (145 aa). Phosphoserine is present on residues serine 14 and serine 51. 2 residues coordinate heme b: histidine 64 and histidine 93.

Belongs to the globin family. As to quaternary structure, heterotetramer of two alpha chains and two epsilon chains in early embryonic hemoglobin Gower-2; two zeta chains and two epsilon chains in early embryonic hemoglobin Gower-1. Red blood cells.

Its function is as follows. The epsilon chain is a beta-type chain of early mammalian embryonic hemoglobin. The protein is Hemoglobin subunit epsilon (HBE1) of Microcebus murinus (Gray mouse lemur).